Consider the following 216-residue polypeptide: Ribosomal RNA small subunit methyltransferase G (216 aa).

S-adenosyl-L-methionine-binding residues include Gly-75, Leu-80, and Arg-141.

The protein belongs to the methyltransferase superfamily. RNA methyltransferase RsmG family.

The protein localises to the cytoplasm. It carries out the reaction guanosine(527) in 16S rRNA + S-adenosyl-L-methionine = N(7)-methylguanosine(527) in 16S rRNA + S-adenosyl-L-homocysteine. Functionally, specifically methylates the N7 position of guanine in position 527 of 16S rRNA. The polypeptide is Ribosomal RNA small subunit methyltransferase G (Nitrosospira multiformis (strain ATCC 25196 / NCIMB 11849 / C 71)).